A 304-amino-acid polypeptide reads, in one-letter code: Flagellin (304 aa).

This sequence belongs to the bacterial flagellin family. Interacts with FliW in a 1:1 complex. Forms a 3-way complex of Hag, FliS and FliW, in which Flis and FliW do not directly interact.

It localises to the secreted. The protein localises to the bacterial flagellum. The protein resides in the cell wall. Functionally, flagellin is the subunit which polymerizes to form the filaments of bacterial flagella. Assembly into flagella requires FliW. Acts as a homeostatic autoinhibitory regulator to control its own cytoplasmic levels. Partner switching by flagellin between FliW and CsrA provides a flagellar assembly checkpoint to tightly control the timing of flagellin synthesis. Flagellin binds to assembly factor FliW, freeing translation regulator CsrA to repress translation of the flagellin mRNA. When the flagellar hook is assembled flagellin is secreted, depleting intracellular flagellin, which frees FliW to interact with CsrA. This derepresses flagellin translation and provides protein for flagellar assembly. Once the flagellar filament is completed cytoplasmic flagellin levels rise and CsrA translation repression of flagellin reinitiates. The protein is Flagellin of Bacillus subtilis (strain 168).